We begin with the raw amino-acid sequence, 324 residues long: Lipoyl synthase (324 aa).

Residues cysteine 72, cysteine 77, cysteine 83, cysteine 98, cysteine 102, cysteine 105, and serine 313 each coordinate [4Fe-4S] cluster. The Radical SAM core domain maps to 84–302; it reads FRFGTASFMI…AQEGKKMGFL (219 aa).

This sequence belongs to the radical SAM superfamily. Lipoyl synthase family. [4Fe-4S] cluster serves as cofactor.

The protein localises to the cytoplasm. The catalysed reaction is [[Fe-S] cluster scaffold protein carrying a second [4Fe-4S](2+) cluster] + N(6)-octanoyl-L-lysyl-[protein] + 2 oxidized [2Fe-2S]-[ferredoxin] + 2 S-adenosyl-L-methionine + 4 H(+) = [[Fe-S] cluster scaffold protein] + N(6)-[(R)-dihydrolipoyl]-L-lysyl-[protein] + 4 Fe(3+) + 2 hydrogen sulfide + 2 5'-deoxyadenosine + 2 L-methionine + 2 reduced [2Fe-2S]-[ferredoxin]. The protein operates within protein modification; protein lipoylation via endogenous pathway; protein N(6)-(lipoyl)lysine from octanoyl-[acyl-carrier-protein]: step 2/2. Its function is as follows. Catalyzes the radical-mediated insertion of two sulfur atoms into the C-6 and C-8 positions of the octanoyl moiety bound to the lipoyl domains of lipoate-dependent enzymes, thereby converting the octanoylated domains into lipoylated derivatives. The polypeptide is Lipoyl synthase (Dichelobacter nodosus (strain VCS1703A)).